The chain runs to 862 residues: Cell surface glycoprotein (862 aa).

The first 34 residues, 1–34 (MTDTQQKIKAVLLTVLMVTSVFAATIAFSGAAAA), serve as a signal peptide directing secretion. Disordered stretches follow at residues 35 to 60 (SERG…SAGN), 101 to 126 (ILLE…EGTE), and 200 to 220 (VNTN…DRDD). Residues 43–57 (YTTGPTDGNQDNVDS) show a composition bias toward polar residues. A compositionally biased stretch (basic and acidic residues) spans 206 to 220 (NDDHPNPAADGDRDD). Asn-442, Asn-520, Asn-550, Asn-702, and Asn-761 each carry an N-linked (GlcNAc...) asparagine glycan. Positions 752-838 (LSDENVEPGN…TEEATTEATG (87 aa)) are disordered. Residues 784 to 801 (SLEEEQPATDTPEPDTDT) show a composition bias toward acidic residues. The segment covering 802–815 (PEPATDTPEPATDT) has biased composition (low complexity). The span at 816–833 (PEPDTDTPEPDTETEEAT) shows a compositional bias: acidic residues. Residues 838–858 (GPGFTAAIALIALVAAALLAV) traverse the membrane as a helical segment. A PGF sorting signal motif is present at residues 839 to 841 (PGF).

This sequence belongs to the halobacterial S-layer protein family. Post-translationally, glycosylated. In terms of processing, cleaved by the archaeosortase ArtA at the C-terminus, with removal of a short hydrophobic segment. Lipidation.

Its subcellular location is the secreted. It localises to the cell wall. The protein resides in the S-layer. The protein localises to the cell membrane. In terms of biological role, S-layer protein. The S-layer is a paracrystalline mono-layered assembly of proteins which coat the surface of the cell. This chain is Cell surface glycoprotein, found in Haloarcula japonica (strain ATCC 49778 / DSM 6131 / JCM 7785 / NBRC 101032 / NCIMB 13157 / TR-1).